Consider the following 45-residue polypeptide: Ribosome-inactivating protein TAP-29 (45 aa).

This sequence belongs to the ribosome-inactivating protein family. Type 1 RIP subfamily.

The catalysed reaction is Endohydrolysis of the N-glycosidic bond at one specific adenosine on the 28S rRNA.. Its function is as follows. Capable of inhibiting HIV-1 infection and replication. It inactivates eukaryotic 60S ribosomal subunits. This chain is Ribosome-inactivating protein TAP-29, found in Trichosanthes kirilowii (Chinese snake gourd).